We begin with the raw amino-acid sequence, 352 residues long: Maleylacetate reductase (352 aa).

This sequence belongs to the iron-containing alcohol dehydrogenase family.

The enzyme catalyses 3-oxoadipate + NAD(+) = maleylacetate + NADH + H(+). The catalysed reaction is 3-oxoadipate + NADP(+) = maleylacetate + NADPH + H(+). The protein operates within aromatic compound metabolism; 3-chlorocatechol degradation. The protein is Maleylacetate reductase (clcE) of Pseudomonas aeruginosa.